A 377-amino-acid chain; its full sequence is WAT1-related protein At5g13670 (377 aa).

Transmembrane regions (helical) follow at residues 9-29, 38-58, 64-84, 99-119, 136-156, 187-207, 214-234, 251-271, 279-299, and 303-323; these read FIAIVFIQCLYALMSIVAKLA, VLVAYRMAVASALITPFALIL, PKLTFKILLQIAILSLFEPVV, TFTSALCNALPAMTFIMACVF, VGTMVAIGGAMLMTFVKGNVI, IMLVASCFSWSCYIILQAKIL, LSLTALMCIMGMLEATVMGLI, LLASIYGGLVSGLAYYVIGWA, FVSAFNPLSMVLVAILSTFVF, and VYVGRVIGSVVIVIGIYLVLW. 2 EamA domains span residues 18 to 149 and 194 to 322; these read LYAL…MLMT and FSWS…YLVL.

This sequence belongs to the drug/metabolite transporter (DMT) superfamily. Plant drug/metabolite exporter (P-DME) (TC 2.A.7.4) family.

Its subcellular location is the membrane. The sequence is that of WAT1-related protein At5g13670 from Arabidopsis thaliana (Mouse-ear cress).